The chain runs to 175 residues: Major pollen allergen Pha a 5.4 (175 aa).

Belongs to the Poa p IX/Phl p VI allergen family.

This chain is Major pollen allergen Pha a 5.4, found in Phalaris aquatica (Canary grass).